A 466-amino-acid chain; its full sequence is NADPH:adrenodoxin oxidoreductase, mitochondrial (466 aa).

FAD is bound by residues A40, E61, L69, and L105. NADP(+)-binding positions include 176-179, 220-221, and E232; these read QGNV and RR. FAD-binding positions include W379 and 386–388; that span reads GVI. An NADP(+)-binding site is contributed by G386.

The protein belongs to the ferredoxin--NADP reductase type 1 family. Requires FAD as cofactor. In terms of tissue distribution, expressed predominantly in prothoracic gland of the larval ring gland and nurse cells of the adult ovary. Low expression is all adult tissues examined.

The protein localises to the mitochondrion inner membrane. The enzyme catalyses 2 reduced [adrenodoxin] + NADP(+) + H(+) = 2 oxidized [adrenodoxin] + NADPH. Its pathway is steroid metabolism; cholesterol metabolism. Required for synthesis of steroid hormones, for olfactory sensory behavior and completion of the second larval molt (a steroid mediated developmental transition) and pupariation. This is NADPH:adrenodoxin oxidoreductase, mitochondrial (dare) from Drosophila melanogaster (Fruit fly).